The chain runs to 140 residues: Nucleoside diphosphate kinase (140 aa).

ATP is bound by residues lysine 11, phenylalanine 59, arginine 87, threonine 93, arginine 104, and asparagine 114. Histidine 117 acts as the Pros-phosphohistidine intermediate in catalysis.

This sequence belongs to the NDK family. As to quaternary structure, homotetramer. The cofactor is Mg(2+).

It localises to the cytoplasm. The catalysed reaction is a 2'-deoxyribonucleoside 5'-diphosphate + ATP = a 2'-deoxyribonucleoside 5'-triphosphate + ADP. It carries out the reaction a ribonucleoside 5'-diphosphate + ATP = a ribonucleoside 5'-triphosphate + ADP. Major role in the synthesis of nucleoside triphosphates other than ATP. The ATP gamma phosphate is transferred to the NDP beta phosphate via a ping-pong mechanism, using a phosphorylated active-site intermediate. In Azorhizobium caulinodans (strain ATCC 43989 / DSM 5975 / JCM 20966 / LMG 6465 / NBRC 14845 / NCIMB 13405 / ORS 571), this protein is Nucleoside diphosphate kinase.